The following is a 71-amino-acid chain: Ceratotoxin-A (71 aa).

The signal sequence occupies residues Met-1 to Ala-23. 2 propeptides span residues Glu-24 to Arg-35 and Val-65 to Gly-71.

Homomer of four to six subunits.

Its subcellular location is the secreted. Female-specific peptides with potent activity against Gram-positive and Gram-negative bacteria. They have as well hemolytic activity. The chain is Ceratotoxin-A (CTXA1) from Ceratitis capitata (Mediterranean fruit fly).